We begin with the raw amino-acid sequence, 201 residues long: NADH-ubiquinone oxidoreductase 21.3 kDa subunit (201 aa).

As to quaternary structure, complex I is composed of about 40 different subunits.

Its subcellular location is the mitochondrion inner membrane. The catalysed reaction is a ubiquinone + NADH + 5 H(+)(in) = a ubiquinol + NAD(+) + 4 H(+)(out). Functionally, transfer of electrons from NADH to the respiratory chain. The immediate electron acceptor for the enzyme is believed to be ubiquinone. The protein is NADH-ubiquinone oxidoreductase 21.3 kDa subunit of Neurospora crassa (strain ATCC 24698 / 74-OR23-1A / CBS 708.71 / DSM 1257 / FGSC 987).